A 79-amino-acid chain; its full sequence is D-alanyl carrier protein (79 aa).

The Carrier domain occupies 1-77; the sequence is MDTKQGVLDI…KIVAKVESLE (77 aa). S35 is subject to O-(pantetheine 4'-phosphoryl)serine.

This sequence belongs to the DltC family. In terms of processing, 4'-phosphopantetheine is transferred from CoA to a specific serine of apo-DCP.

It is found in the cytoplasm. The protein operates within cell wall biogenesis; lipoteichoic acid biosynthesis. Carrier protein involved in the D-alanylation of lipoteichoic acid (LTA). The loading of thioester-linked D-alanine onto DltC is catalyzed by D-alanine--D-alanyl carrier protein ligase DltA. The DltC-carried D-alanyl group is further transferred to cell membrane phosphatidylglycerol (PG) by forming an ester bond, probably catalyzed by DltD. D-alanylation of LTA plays an important role in modulating the properties of the cell wall in Gram-positive bacteria, influencing the net charge of the cell wall. The polypeptide is D-alanyl carrier protein (Lactobacillus helveticus (strain DPC 4571)).